The following is a 458-amino-acid chain: tRNA modification GTPase MnmE (458 aa).

Positions 22, 84, and 123 each coordinate (6S)-5-formyl-5,6,7,8-tetrahydrofolate. The TrmE-type G domain occupies 220-379 (GIATAIIGRP…LEKAIADLFF (160 aa)). Asparagine 230 is a binding site for K(+). GTP is bound by residues 230-235 (NVGKSS), 249-255 (TDIAGTT), and 274-277 (DTAG). Residue serine 234 coordinates Mg(2+). Residues threonine 249, isoleucine 251, and threonine 254 each coordinate K(+). Residue threonine 255 participates in Mg(2+) binding. Lysine 458 serves as a coordination point for (6S)-5-formyl-5,6,7,8-tetrahydrofolate.

Belongs to the TRAFAC class TrmE-Era-EngA-EngB-Septin-like GTPase superfamily. TrmE GTPase family. As to quaternary structure, homodimer. Heterotetramer of two MnmE and two MnmG subunits. Requires K(+) as cofactor.

It is found in the cytoplasm. Functionally, exhibits a very high intrinsic GTPase hydrolysis rate. Involved in the addition of a carboxymethylaminomethyl (cmnm) group at the wobble position (U34) of certain tRNAs, forming tRNA-cmnm(5)s(2)U34. This is tRNA modification GTPase MnmE from Bacillus cereus (strain ATCC 14579 / DSM 31 / CCUG 7414 / JCM 2152 / NBRC 15305 / NCIMB 9373 / NCTC 2599 / NRRL B-3711).